A 372-amino-acid polypeptide reads, in one-letter code: Cytochrome b (372 aa).

Transmembrane regions (helical) follow at residues 25–45 (FGSMLLTCSALQTITGFFLAI), 69–90 (WIMQNLHAIGASMFFICIYIHI), 105–125 (WLSGTILLFILMATAFFGYVL), and 170–190 (FFALHFILPFTIISLSSIHIM). Heme b contacts are provided by His-75 and His-89. Heme b is bound by residues His-174 and His-188. His-193 serves as a coordination point for a ubiquinone. 4 helical membrane passes run 218-238 (HKDILVLTIMLTTMFIIMTLT), 280-300 (LGGTVALVLSVAILLTTPFTH), 312-332 (LTQLMFWTLVATFITITWAAT), and 339-358 (FTMIGQMTSLLYFSFFIMNP).

The protein belongs to the cytochrome b family. In terms of assembly, the cytochrome bc1 complex contains 3 respiratory subunits (MT-CYB, CYC1 and UQCRFS1), 2 core proteins (UQCRC1 and UQCRC2) and probably 6 low-molecular weight proteins. The cofactor is heme b.

It localises to the mitochondrion inner membrane. Functionally, component of the ubiquinol-cytochrome c reductase complex (complex III or cytochrome b-c1 complex) that is part of the mitochondrial respiratory chain. The b-c1 complex mediates electron transfer from ubiquinol to cytochrome c. Contributes to the generation of a proton gradient across the mitochondrial membrane that is then used for ATP synthesis. The sequence is that of Cytochrome b (MT-CYB) from Lycodon semicarinatus (Ryukyu odd-tooth snake).